The following is a 347-amino-acid chain: 4-hydroxy-2-oxovalerate aldolase 1 (347 aa).

In terms of domain architecture, Pyruvate carboxyltransferase spans 11-263 (VVLHDMCLRD…ETGVDLFKLM (253 aa)). 19 to 20 (RD) contributes to the substrate binding site. Position 20 (Asp20) interacts with Mn(2+). Residue His23 is the Proton acceptor of the active site. Positions 173 and 202 each coordinate substrate. Residues His202 and His204 each contribute to the Mn(2+) site. Residue Tyr293 coordinates substrate.

Belongs to the 4-hydroxy-2-oxovalerate aldolase family.

It carries out the reaction (S)-4-hydroxy-2-oxopentanoate = acetaldehyde + pyruvate. In Azoarcus sp. (strain BH72), this protein is 4-hydroxy-2-oxovalerate aldolase 1 (lapG).